The chain runs to 274 residues: MSSLIKEIEEAWQIKDKLLQDSSKLITLKQTLNDIIESLNQGTIRVCEKQENSWHVNEWVKKAILLYFITTESQLYNNNYNSWYDKVAPKFSADTDKNTFKEAAIRKVPGAVVRTGTYIAKNVVIMPSFINIGAYIDEGTMIDTWATIGSCAQIGKNCHISGGTGIGGVLEPLQAKPVIIEDNCFIGARSEIAEGVIVEEGAVISMGVFIGSSTKIVYRDTGEIIYGRIPAYSVVVPGVLPAKEAGKPGLYCVVIVKQVDKTTRAKVSINDLLR.

Positions 106 and 143 each coordinate substrate.

The protein belongs to the transferase hexapeptide repeat family. In terms of assembly, homotrimer.

It is found in the cytoplasm. The catalysed reaction is (S)-2,3,4,5-tetrahydrodipicolinate + succinyl-CoA + H2O = (S)-2-succinylamino-6-oxoheptanedioate + CoA. It participates in amino-acid biosynthesis; L-lysine biosynthesis via DAP pathway; LL-2,6-diaminopimelate from (S)-tetrahydrodipicolinate (succinylase route): step 1/3. This chain is 2,3,4,5-tetrahydropyridine-2,6-dicarboxylate N-succinyltransferase, found in Rickettsia conorii (strain ATCC VR-613 / Malish 7).